The chain runs to 155 residues: MGFKTKFKRYFNLDDHVEEVERYVEEPEQRDERPALEKGRAPKEKQTAGMEQNQNIVSLQSVQKSAKMILLEPRSYDEAQDIADHLKRRKAVVINLLRIEQEQALRIVDFLSGTVYAIGGDIQKIGPGIFLCTPDNVEITGSISDWVTRQTDSTV.

Over residues 22 to 46 the composition is skewed to basic and acidic residues; it reads RYVEEPEQRDERPALEKGRAPKEKQ. The segment at 22–54 is disordered; that stretch reads RYVEEPEQRDERPALEKGRAPKEKQTAGMEQNQ.

The protein belongs to the SepF family. In terms of assembly, homodimer. Interacts with FtsZ.

The protein resides in the cytoplasm. In terms of biological role, cell division protein that is part of the divisome complex and is recruited early to the Z-ring. Probably stimulates Z-ring formation, perhaps through the cross-linking of FtsZ protofilaments. Its function overlaps with FtsA. In Shouchella clausii (strain KSM-K16) (Alkalihalobacillus clausii), this protein is Cell division protein SepF.